The primary structure comprises 566 residues: 4-coumarate--CoA ligase-like 6 (566 aa).

A disordered region spans residues 1–21 (MAATHLHIPPNPKTQTSHQNP). Residues Ser-212, Ser-213, Gly-214, Thr-215, Thr-216, and Lys-220 each coordinate ATP. Tyr-263 contacts (E)-4-coumaroyl-AMP. Arg-284 serves as a coordination point for CoA. The segment at 286-356 (DASDVVNVIE…QTLPHVDLIQ (71 aa)) is SBD1. (E)-4-coumaroyl-AMP-binding residues include Ala-334, Gln-356, Gly-357, and Thr-361. Positions 356, 357, 361, 442, and 457 each coordinate ATP. Positions 357 to 421 (GYGMTESTAV…IQGPGVMKGY (65 aa)) are SBD2. 2 residues coordinate (E)-4-coumaroyl-AMP: Lys-459 and Lys-463. Positions 465 and 466 each coordinate CoA. Position 548 (Lys-548) interacts with ATP. The Microbody targeting signal motif lies at 564–566 (SRL).

The protein belongs to the ATP-dependent AMP-binding enzyme family. Requires Mg(2+) as cofactor. In terms of tissue distribution, expressed at very low level in leaves.

The protein localises to the peroxisome. The enzyme catalyses (E)-4-coumarate + ATP + CoA = (E)-4-coumaroyl-CoA + AMP + diphosphate. The catalysed reaction is (E)-4-coumarate + ATP + H(+) = (E)-4-coumaroyl-AMP + diphosphate. It catalyses the reaction (E)-4-coumaroyl-AMP + CoA = (E)-4-coumaroyl-CoA + AMP + H(+). It carries out the reaction (E)-ferulate + ATP + CoA = (E)-feruloyl-CoA + AMP + diphosphate. The enzyme catalyses (E)-ferulate + ATP + H(+) = (E)-feruloyl-AMP + diphosphate. The catalysed reaction is (E)-feruloyl-AMP + CoA = (E)-feruloyl-CoA + AMP + H(+). It catalyses the reaction (E)-caffeate + ATP + CoA = (E)-caffeoyl-CoA + AMP + diphosphate. It carries out the reaction (E)-caffeate + ATP + H(+) = (E)-caffeoyl-AMP + diphosphate. The enzyme catalyses (E)-caffeoyl-AMP + CoA = (E)-caffeoyl-CoA + AMP + H(+). The catalysed reaction is (E)-cinnamate + ATP + CoA = (E)-cinnamoyl-CoA + AMP + diphosphate. It catalyses the reaction 4-hydroxybenzoate + ATP + CoA = 4-hydroxybenzoyl-CoA + AMP + diphosphate. It carries out the reaction tetradecanoate + ATP + CoA = tetradecanoyl-CoA + AMP + diphosphate. The enzyme catalyses hexanoate + ATP + CoA = hexanoyl-CoA + AMP + diphosphate. The catalysed reaction is heptanoate + ATP + CoA = heptanoyl-CoA + AMP + diphosphate. Functionally, contributes to jasmonic acid biosynthesis by initiating the beta-oxidative chain shortening of its precursors. Acts as a carboxylate--CoA ligase that can use preferentially p-coumarate, ferulate and caffeate as substrates and, with a lower efficiency, (E)-cinnamate and 4-hydroxybenzoate as substrates. Involved in the biosynthesis of ubiquinone from phenylalanine by activating the propyl side chain of 4-coumarate, and possibly trans-cinnamate and 4-hydroxybenzoate, for subsequent beta-oxidative shortening and the formation of the benzenoid moiety of ubiquinone. Follows a two-step reaction mechanism, wherein the carboxylate substrate first undergoes adenylation by ATP, followed by a thioesterification in the presence of CoA to yield the final CoA thioester. This Arabidopsis thaliana (Mouse-ear cress) protein is 4-coumarate--CoA ligase-like 6.